Reading from the N-terminus, the 313-residue chain is Dehydrodolichyl diphosphate synthase CPT5, chloroplastic (313 aa).

The N-terminal 42 residues, Met-1–Ala-42, are a transit peptide targeting the chloroplast. The active site involves Asp-89.

This sequence belongs to the UPP synthase family. Mg(2+) is required as a cofactor. As to expression, expressed in leaf trichomes, stem trichomes and old leaves. Expressed at low levels in young leaves and flowers.

The protein localises to the plastid. The protein resides in the chloroplast. It catalyses the reaction n isopentenyl diphosphate + (2E,6E)-farnesyl diphosphate = a di-trans,poly-cis-polyprenyl diphosphate + n diphosphate. Functionally, catalyzes cis-prenyl chain elongation to produce the polyprenyl backbone of dolichol, a glycosyl carrier-lipid required for the biosynthesis of several classes of glycoprotein. This is Dehydrodolichyl diphosphate synthase CPT5, chloroplastic from Solanum lycopersicum (Tomato).